Reading from the N-terminus, the 139-residue chain is Mitochondrial intermembrane space import and assembly protein 40-A (139 aa).

Intrachain disulfides connect Cys53–Cys55, Cys64–Cys97, and Cys74–Cys87. The 45-residue stretch at 61–105 (SGPCGEQFKSAFSCFHYSQEEIKGSDCLDQFRGMQECMQKYPDLY) folds into the CHCH domain. 2 consecutive short sequence motifs (cx9C motif) follow at residues 64–74 (CGEQFKSAFSC) and 87–97 (CLDQFRGMQEC). Residues 103–139 (DLYPQEDDEEEAEKEKQNKEAEPSVTQSSDTKEESSS) form a disordered region. Residues 115–124 (EKEKQNKEAE) are compositionally biased toward basic and acidic residues.

As to quaternary structure, monomer. Can form homooligomers.

The protein resides in the mitochondrion intermembrane space. Central component of a redox-sensitive mitochondrial intermembrane space import machinery which is required for the biogenesis of respiratory chain complexes. Functions as chaperone and catalyzes the formation of disulfide bonds in substrate proteins, such as COX17 or MICU1. Required for the import and folding of small cysteine-containing proteins (small Tim) in the mitochondrial intermembrane space (IMS). Precursor proteins to be imported into the IMS are translocated in their reduced form into the mitochondria. The polypeptide is Mitochondrial intermembrane space import and assembly protein 40-A (chchd4-a) (Xenopus laevis (African clawed frog)).